Reading from the N-terminus, the 90-residue chain is Protein PRAC2 (90 aa).

In terms of tissue distribution, highly expressed in prostate and testis. Also detected in placenta, muscle, colon, peripheral blood leukocytes and skin.

The protein localises to the nucleus. The protein is Protein PRAC2 of Homo sapiens (Human).